Reading from the N-terminus, the 342-residue chain is Ketol-acid reductoisomerase (NADP(+)) (342 aa).

The KARI N-terminal Rossmann domain occupies 2–182 (AEMFYDDDAD…GGLRAGGIKT (181 aa)). NADP(+) contacts are provided by residues 25-28 (FGSQ), K48, S51, S53, and 83-86 (DHLQ). H108 is a catalytic residue. Residue G134 participates in NADP(+) binding. Positions 183–328 (TFTEETETDL…RELRKLMAWV (146 aa)) constitute a KARI C-terminal knotted domain. D191, E195, E227, and E231 together coordinate Mg(2+). S252 lines the substrate pocket.

Belongs to the ketol-acid reductoisomerase family. Mg(2+) is required as a cofactor.

It catalyses the reaction (2R)-2,3-dihydroxy-3-methylbutanoate + NADP(+) = (2S)-2-acetolactate + NADPH + H(+). The enzyme catalyses (2R,3R)-2,3-dihydroxy-3-methylpentanoate + NADP(+) = (S)-2-ethyl-2-hydroxy-3-oxobutanoate + NADPH + H(+). Its pathway is amino-acid biosynthesis; L-isoleucine biosynthesis; L-isoleucine from 2-oxobutanoate: step 2/4. The protein operates within amino-acid biosynthesis; L-valine biosynthesis; L-valine from pyruvate: step 2/4. Functionally, involved in the biosynthesis of branched-chain amino acids (BCAA). Catalyzes an alkyl-migration followed by a ketol-acid reduction of (S)-2-acetolactate (S2AL) to yield (R)-2,3-dihydroxy-isovalerate. In the isomerase reaction, S2AL is rearranged via a Mg-dependent methyl migration to produce 3-hydroxy-3-methyl-2-ketobutyrate (HMKB). In the reductase reaction, this 2-ketoacid undergoes a metal-dependent reduction by NADPH to yield (R)-2,3-dihydroxy-isovalerate. This is Ketol-acid reductoisomerase (NADP(+)) from Kineococcus radiotolerans (strain ATCC BAA-149 / DSM 14245 / SRS30216).